A 316-amino-acid polypeptide reads, in one-letter code: uncharacterized protein (316 aa).

Threonine 126 contacts substrate. The active-site Proton acceptor is tyrosine 149.

It belongs to the NAD(P)-dependent epimerase/dehydratase family.

This is an uncharacterized protein from Bacillus subtilis (strain 168).